Here is a 245-residue protein sequence, read N- to C-terminus: TLC domain-containing protein 5 (245 aa).

A run of 6 helical transmembrane segments spans residues 1–21 (MALA…SLYI), 38–58 (LVTF…GFID), 75–95 (VHVL…CVYF), 99–119 (GALM…ALVL), 162–182 (FLFV…LLFC), and 191–211 (WFVK…MFSI). Positions 29 to 204 (HRSYEWSCRL…AGGVAMYAVS (176 aa)) constitute a TLC domain.

Belongs to the TLCD5 family.

It is found in the membrane. The protein is TLC domain-containing protein 5 of Homo sapiens (Human).